The following is a 388-amino-acid chain: UDP-N-acetylglucosamine--N-acetylmuramyl-(pentapeptide) pyrophosphoryl-undecaprenol N-acetylglucosamine transferase (388 aa).

Residues 15–17, N125, R168, S196, and Q297 contribute to the UDP-N-acetyl-alpha-D-glucosamine site; that span reads TGG.

The protein belongs to the glycosyltransferase 28 family. MurG subfamily.

It localises to the cell inner membrane. It carries out the reaction di-trans,octa-cis-undecaprenyl diphospho-N-acetyl-alpha-D-muramoyl-L-alanyl-D-glutamyl-meso-2,6-diaminopimeloyl-D-alanyl-D-alanine + UDP-N-acetyl-alpha-D-glucosamine = di-trans,octa-cis-undecaprenyl diphospho-[N-acetyl-alpha-D-glucosaminyl-(1-&gt;4)]-N-acetyl-alpha-D-muramoyl-L-alanyl-D-glutamyl-meso-2,6-diaminopimeloyl-D-alanyl-D-alanine + UDP + H(+). It functions in the pathway cell wall biogenesis; peptidoglycan biosynthesis. Cell wall formation. Catalyzes the transfer of a GlcNAc subunit on undecaprenyl-pyrophosphoryl-MurNAc-pentapeptide (lipid intermediate I) to form undecaprenyl-pyrophosphoryl-MurNAc-(pentapeptide)GlcNAc (lipid intermediate II). The chain is UDP-N-acetylglucosamine--N-acetylmuramyl-(pentapeptide) pyrophosphoryl-undecaprenol N-acetylglucosamine transferase from Novosphingobium aromaticivorans (strain ATCC 700278 / DSM 12444 / CCUG 56034 / CIP 105152 / NBRC 16084 / F199).